A 181-amino-acid polypeptide reads, in one-letter code: Probable RNA 2'-phosphotransferase (181 aa).

The protein belongs to the KptA/TPT1 family.

In terms of biological role, removes the 2'-phosphate from RNA via an intermediate in which the phosphate is ADP-ribosylated by NAD followed by a presumed transesterification to release the RNA and generate ADP-ribose 1''-2''-cyclic phosphate (APPR&gt;P). May function as an ADP-ribosylase. This chain is Probable RNA 2'-phosphotransferase, found in Nostoc punctiforme (strain ATCC 29133 / PCC 73102).